Consider the following 282-residue polypeptide: MADQPVQVNKLKTKITKGDMFKTFVFENFQQASFNFERIHALAFCVDMIPTIKRVYSKKEDQVAALKRHLVFFNTTPAMCGPIVGVTMALEEGRAAGEPIDDGTINSFKVGLMGPLAGVGDPLMWGTLRPILAALGASLALQGSWLGPILFFVAFNAVRLSLKWYGLQLGFSRGLALVKDMSGNLLQKITEGATVLGLFIMGILVTKWTTINVPLVVSKTTVNGKTTVTTLQNILDQFCPGLLALGWTLLCMYLLRKKVSPILLIFALFGVGIVGYWLGILK.

Residues 13–281 enclose the PTS EIID domain; sequence TKITKGDMFK…GIVGYWLGIL (269 aa). A run of 4 helical transmembrane segments spans residues 135–155, 197–217, 234–254, and 261–281; these read LGAS…FVAF, GLFI…PLVV, ILDQ…CMYL, and PILL…LGIL.

Its subcellular location is the cell membrane. In terms of biological role, the phosphoenolpyruvate-dependent sugar phosphotransferase system (PTS), a major carbohydrate active transport system, catalyzes the phosphorylation of incoming sugar substrates concomitant with their translocation across the cell membrane. The enzyme II SorABCD PTS system is involved in L-sorbose transport. The protein is PTS system sorbose-specific EIID component of Lacticaseibacillus casei (Lactobacillus casei).